The sequence spans 146 residues: MKYNPRVTSSRRKNRKAHFTASSSERRVIMSSPLSTDLRQKYNVRSMPIRKDDEVQIVRGTYKGREGKVVQVYRRKWVIHIERITREKVNGTTVNVGIQPSKVVITKLRLDKDRKSLLERKAKGRAAADKEKGTKFTSEDVMQNVD.

Disordered regions lie at residues 1-26 (MKYN…SSER) and 121-146 (KAKG…QNVD). Over residues 9 to 18 (SSRRKNRKAH) the composition is skewed to basic residues. Residues 121–138 (KAKGRAAADKEKGTKFTS) show a composition bias toward basic and acidic residues.

This sequence belongs to the universal ribosomal protein uL24 family.

The sequence is that of Large ribosomal subunit protein uL24z (RPL26A) from Arabidopsis thaliana (Mouse-ear cress).